We begin with the raw amino-acid sequence, 138 residues long: Cysteine desulfuration protein SufE (138 aa).

The active-site Cysteine persulfide intermediate is Cys51.

The protein belongs to the SufE family. In terms of assembly, homodimer. Interacts with SufS.

The protein resides in the cytoplasm. It participates in cofactor biosynthesis; iron-sulfur cluster biosynthesis. In terms of biological role, participates in cysteine desulfuration mediated by SufS. Cysteine desulfuration mobilizes sulfur from L-cysteine to yield L-alanine and constitutes an essential step in sulfur metabolism for biosynthesis of a variety of sulfur-containing biomolecules. Functions as a sulfur acceptor for SufS, by mediating the direct transfer of the sulfur atom from the S-sulfanylcysteine of SufS, an intermediate product of cysteine desulfuration process. The protein is Cysteine desulfuration protein SufE of Escherichia coli (strain K12 / MC4100 / BW2952).